The following is a 438-amino-acid chain: Glucose-6-phosphate isomerase (438 aa).

Glu289 acts as the Proton donor in catalysis. Active-site residues include His310 and Lys424.

The protein belongs to the GPI family.

It localises to the cytoplasm. It carries out the reaction alpha-D-glucose 6-phosphate = beta-D-fructose 6-phosphate. Its pathway is carbohydrate biosynthesis; gluconeogenesis. The protein operates within carbohydrate degradation; glycolysis; D-glyceraldehyde 3-phosphate and glycerone phosphate from D-glucose: step 2/4. Functionally, catalyzes the reversible isomerization of glucose-6-phosphate to fructose-6-phosphate. The sequence is that of Glucose-6-phosphate isomerase from Oenococcus oeni (strain ATCC BAA-331 / PSU-1).